A 253-amino-acid chain; its full sequence is 1-(5-phosphoribosyl)-5-[(5-phosphoribosylamino)methylideneamino] imidazole-4-carboxamide isomerase (253 aa).

D8 acts as the Proton acceptor in catalysis. D131 (proton donor) is an active-site residue.

Belongs to the HisA/HisF family.

The protein resides in the cytoplasm. The enzyme catalyses 1-(5-phospho-beta-D-ribosyl)-5-[(5-phospho-beta-D-ribosylamino)methylideneamino]imidazole-4-carboxamide = 5-[(5-phospho-1-deoxy-D-ribulos-1-ylimino)methylamino]-1-(5-phospho-beta-D-ribosyl)imidazole-4-carboxamide. It functions in the pathway amino-acid biosynthesis; L-histidine biosynthesis; L-histidine from 5-phospho-alpha-D-ribose 1-diphosphate: step 4/9. This chain is 1-(5-phosphoribosyl)-5-[(5-phosphoribosylamino)methylideneamino] imidazole-4-carboxamide isomerase, found in Polynucleobacter asymbioticus (strain DSM 18221 / CIP 109841 / QLW-P1DMWA-1) (Polynucleobacter necessarius subsp. asymbioticus).